Here is a 448-residue protein sequence, read N- to C-terminus: Phosphoglucosamine mutase (448 aa).

The active-site Phosphoserine intermediate is S100. Residues S100, D240, D242, and D244 each contribute to the Mg(2+) site. Phosphoserine is present on S100.

This sequence belongs to the phosphohexose mutase family. Homodimer, may form a complex with CdaA. Requires Mg(2+) as cofactor. Activated by phosphorylation.

The catalysed reaction is alpha-D-glucosamine 1-phosphate = D-glucosamine 6-phosphate. In terms of biological role, catalyzes the conversion of glucosamine-6-phosphate to glucosamine-1-phosphate. Glucosamine-1-phosphate is used for cell wall biosynthesis. The protein is Phosphoglucosamine mutase of Bacillus subtilis (strain 168).